The sequence spans 264 residues: Probable septum site-determining protein MinC (264 aa).

Positions 103–147 (SHGRRPRGGNDAKDADRNDAQDAQGAPEHAQAAEAPASTSAIPPA) are disordered. Residues 110 to 122 (GGNDAKDADRNDA) show a composition bias toward basic and acidic residues. Residues 124–147 (DAQGAPEHAQAAEAPASTSAIPPA) show a composition bias toward low complexity.

This sequence belongs to the MinC family. Interacts with MinD and FtsZ.

Functionally, cell division inhibitor that blocks the formation of polar Z ring septums. Rapidly oscillates between the poles of the cell to destabilize FtsZ filaments that have formed before they mature into polar Z rings. Prevents FtsZ polymerization. The protein is Probable septum site-determining protein MinC of Ralstonia pickettii (strain 12J).